Reading from the N-terminus, the 95-residue chain is Aspartyl/glutamyl-tRNA(Asn/Gln) amidotransferase subunit C (95 aa).

It belongs to the GatC family. Heterotrimer of A, B and C subunits.

The enzyme catalyses L-glutamyl-tRNA(Gln) + L-glutamine + ATP + H2O = L-glutaminyl-tRNA(Gln) + L-glutamate + ADP + phosphate + H(+). It carries out the reaction L-aspartyl-tRNA(Asn) + L-glutamine + ATP + H2O = L-asparaginyl-tRNA(Asn) + L-glutamate + ADP + phosphate + 2 H(+). Its function is as follows. Allows the formation of correctly charged Asn-tRNA(Asn) or Gln-tRNA(Gln) through the transamidation of misacylated Asp-tRNA(Asn) or Glu-tRNA(Gln) in organisms which lack either or both of asparaginyl-tRNA or glutaminyl-tRNA synthetases. The reaction takes place in the presence of glutamine and ATP through an activated phospho-Asp-tRNA(Asn) or phospho-Glu-tRNA(Gln). The protein is Aspartyl/glutamyl-tRNA(Asn/Gln) amidotransferase subunit C of Ruegeria pomeroyi (strain ATCC 700808 / DSM 15171 / DSS-3) (Silicibacter pomeroyi).